We begin with the raw amino-acid sequence, 517 residues long: FAD-dependent monooxygenase FUP4 (517 aa).

The signal sequence occupies residues 1-19 (MRQSSTLTWTSVLLAPLAA). The 172-residue stretch at 75-246 (QALRPACLVH…TRFDLDLYDQ (172 aa)) folds into the FAD-binding PCMH-type domain. H112 is modified (pros-8alpha-FAD histidine). N-linked (GlcNAc...) asparagine glycans are attached at residues N163, N208, and N346.

This sequence belongs to the oxygen-dependent FAD-linked oxidoreductase family. FAD serves as cofactor.

Its pathway is secondary metabolite biosynthesis; terpenoid biosynthesis. Its function is as follows. FAD-dependent monooxygenase; part of the gene cluster that mediates the biosynthesis of the mycotoxin fusaproliferin (FUP) that belongs to the class of bicyclic sesterterpenoids. FUP4 catalyzes the oxidation of the hydroxy group at the C-16 position of preterpestacin III to a keto group, leading to the formation of (-)-terpestacin. The product of FUP1, preterpestacin I, might also serve as a substrate of FUP4 to yield oxo-preterpestacin I. The FUP biosynthetic pathway starts with the enzyme encoded by FUP1 that combines a C-terminal prenyltransferase domain responsible for the synthesis of geranylgeranyl diphosphate with the N-terminal terpene cyclase domain, to yield preterpestacin I. Preterpestacin I is then decorated by oxygenation steps that are catalyzed by two cytochrome P450 monooxygenases. First, FUP2 introduces a hydroxyl group at the C-24 position resulting in the formation of preterpestacin IIa. The second P450 monooxygenase catalyzes the hydroxylation at C-16 and C-17 of preterpestacin IIa, producing preterpestacin III. Subsequently, the FAD-dependent oxidoreductase FUP4 catalyzes the oxidation of the hydroxy group at the C-16 position to a keto group, leading to the formation of (-)-terpestacin, which is the immediate precursor of FUP. The final step in the proposed biosynthetic pathway is the addition of an acetyl group at the C-24 position of terpestacin, which is catalyzed by the acetyltransferase FUP5. The chain is FAD-dependent monooxygenase FUP4 from Fusarium proliferatum (strain ET1) (Orchid endophyte fungus).